A 260-amino-acid polypeptide reads, in one-letter code: Putative ABC transporter ATP-binding protein (260 aa).

The region spanning Ile-4–Pro-243 is the ABC transporter domain. Position 36 to 43 (Gly-36 to Thr-43) interacts with ATP.

It belongs to the ABC transporter superfamily.

The protein is Putative ABC transporter ATP-binding protein (abcX) of Streptococcus mutans serotype c (strain ATCC 700610 / UA159).